The primary structure comprises 102 residues: Co-chaperonin GroES (102 aa).

This sequence belongs to the GroES chaperonin family. Heptamer of 7 subunits arranged in a ring. Interacts with the chaperonin GroEL.

It is found in the cytoplasm. Functionally, together with the chaperonin GroEL, plays an essential role in assisting protein folding. The GroEL-GroES system forms a nano-cage that allows encapsulation of the non-native substrate proteins and provides a physical environment optimized to promote and accelerate protein folding. GroES binds to the apical surface of the GroEL ring, thereby capping the opening of the GroEL channel. The chain is Co-chaperonin GroES from Chlamydia trachomatis serovar D (strain ATCC VR-885 / DSM 19411 / UW-3/Cx).